Reading from the N-terminus, the 240-residue chain is Terpene cyclase cdmG (240 aa).

Transmembrane regions (helical) follow at residues 16–36 (YASIVDAATLVQGFLWALNYG), 48–68 (YGMAIFPLCCNYAWELVYTVI), 78–98 (IIMTTWLILNSIMMGFTIKFA), 112–132 (IPFIFLAGVAAFVIAQLALAA), 134–154 (VGPGLAMNWVAALCYLLLTIG), and 167–187 (GVSYTMWLSRFVGTYVGVICV). The N-linked (GlcNAc...) asparagine glycan is linked to asparagine 197. A helical membrane pass occupies residues 205 to 225 (IMKCFSGISLAVEIVYGVTLW).

It belongs to the paxB family.

It localises to the membrane. The catalysed reaction is verruculide C epoxide = 3-hydroxypentacecilide A. The protein operates within secondary metabolite biosynthesis; terpenoid biosynthesis. Terpene cyclase; part of the gene cluster that mediates the biosynthesis of chrodrimanin B, a meroterpenoid that acts as a potent blocker of insect GABA-gated chloride channels. The first step of the pathway is the biosynthesis of 6-hydroxymellein by the polyketide synthase cdmE. The prenyltransferase cdmH acts as a 6-hydroxymellein 5-farnesyltransferase and produces the hydrophobic metabolite verruculide C. The FAD-dependent monooxygenase cdmI further converts verruculide C into verruculide B. The terpene cyclase cdmG then produced the pentacyclic molecule 3-hydroxypentacecilide A, the backbone structure of chrodrimanin B, via folding the farnesyl moiety of the substrate into the chair-boat conformation. The short-chain dehydrogenase/reductase cdmF functions as the 3-OH dehydrogenase that oxidizes the C-3 hydroxyl group of 3-hydroxypentacecilide A and produces chrodrimanin C, the dehydrogenated product of 3-hydroxypentacecilide A. The cytochrome P450 monooxygenase cdmJ then accepts both 3-hydroxypentacecilide A and chrodrimanin C and functions as a C-7-beta-hydroxylase to produce respectively chrodrimanin H and chrodrimanin F. The dioxygenase cdmA accepts chrodrimanin H to afford chrodrimanin E, which is further transformed to chrodrimanin A by the dioxygenase cdmD. CdmA can also accept chrodrimanin C as substrate to convert it into verruculide A, which is further converted into chrodrimanin T by cdmD. The last step of the biosynthesis is proposed to be performed by the acetyltransferase cdmC which acetylates chrodrimanin A to yield chrodrimanin B. The pathway may also lead to the production of additional shunt products, including chrodrimanins T and U. This chain is Terpene cyclase cdmG, found in Talaromyces verruculosus (Penicillium verruculosum).